A 1761-amino-acid chain; its full sequence is Laminin subunit beta-4 (1761 aa).

The first 19 residues, 1 to 19 (MQFQLTLFLHLGWLSYSKA), serve as a signal peptide directing secretion. One can recognise a Laminin N-terminal domain in the interval 24-264 (NRGACHPTTG…ALYEMIVRGS (241 aa)). Residues N169, N229, and N246 are each glycosylated (N-linked (GlcNAc...) asparagine). Cystine bridges form between C265-C274, C267-C295, C297-C306, C309-C329, C332-C341, C334-C359, C362-C371, C374-C392, C395-C408, C397-C423, C425-C434, C437-C452, C455-C468, C457-C475, C477-C486, C489-C503, C506-C518, C508-C525, and C527-C536. Laminin EGF-like domains follow at residues 265 to 331 (CFCN…ACRS), 332 to 394 (CSCN…ACIP), 395 to 454 (CECD…GCQP), and 455 to 505 (CDCN…GCSP). The Laminin EGF-like 5; truncated domain maps to 506–552 (CDCDIGGAYSNVCSPKNGQCECRPHVTGRSCSEPAPGYFFAPLNFYL). Residues 545–763 (FAPLNFYLYE…LIISMSAKLH (219 aa)) form the Laminin IV type B domain. Disulfide bonds link C769-C781, C771-C788, C790-C799, C802-C814, C817-C829, C819-C836, C838-C847, C850-C860, C863-C872, C865-C879, C882-C891, C894-C908, C913-C938, C940-C949, C952-C967, C970-C984, C972-C991, C994-C1003, C1006-C1019, C1022-C1043, C1024-C1050, C1052-C1061, C1064-C1077, C1080-C1092, C1082-C1099, C1101-C1110, C1113-C1125, C1128-C1140, C1130-C1147, C1149-C1158, and C1161-C1172. Laminin EGF-like domains follow at residues 769–816 (CKCH…GCHP), 817–862 (CHCH…SCHP), 863–910 (CPCN…PCRP), 911–969 (CLCP…PCQP), 970–1021 (CACN…TCRR), 1022–1079 (CSCH…GCQS), 1080–1127 (CDCD…RCIP), and 1128–1174 (CDCN…TCLQ). N1016 carries N-linked (GlcNAc...) asparagine glycosylation. An N-linked (GlcNAc...) asparagine glycan is attached at N1055. The interval 1175–1375 (CHLCFDQWDH…PDIQILNEKV (201 aa)) is domain II. N1223, N1301, N1326, N1333, and N1354 each carry an N-linked (GlcNAc...) asparagine glycan. Positions 1243 to 1301 (KVKDYHDSVRRQIMQLNEQLKAVYEFQDLKDTIERAKNEADLLLEDLQEEIDLQSSVLN) form a coiled coil. The domain alpha stretch occupies residues 1376 to 1408 (CGDPGNVPCVPLPCGGALCTGRKGHRKCRGPGC). The interval 1409-1761 (HGSLTLSTNA…QEKKYARCYS (353 aa)) is domain I. A coiled-coil region spans residues 1416 to 1480 (TNALQKAQEA…SDSEEENINL (65 aa)). N-linked (GlcNAc...) asparagine glycans are attached at residues N1469, N1517, N1587, N1596, N1609, and N1725. Residues 1525–1759 (IQKHMQLCED…VEQEKKYARC (235 aa)) adopt a coiled-coil conformation.

Laminin is a complex glycoprotein, consisting of three different polypeptide chains (alpha, beta, gamma), which are bound to each other by disulfide bonds into a cross-shaped molecule comprising one long and three short arms with globules at each end.

It localises to the secreted. It is found in the extracellular space. The protein localises to the extracellular matrix. The protein resides in the basement membrane. Its function is as follows. Binding to cells via a high affinity receptor, laminin is thought to mediate the attachment, migration and organization of cells into tissues during embryonic development by interacting with other extracellular matrix components. This Homo sapiens (Human) protein is Laminin subunit beta-4 (LAMB4).